The sequence spans 161 residues: Non-secretory ribonuclease (161 aa).

The signal sequence occupies residues 1–27; sequence MVPKLFTSQICLLLLLGLLAVEGSLHV. C-linked (Man) tryptophan glycosylation occurs at tryptophan 34. Histidine 42 functions as the Proton acceptor in the catalytic mechanism. Asparagine 44 carries an N-linked (GlcNAc...) asparagine glycan. Intrachain disulfides connect cysteine 50-cysteine 110, cysteine 64-cysteine 123, cysteine 82-cysteine 138, and cysteine 89-cysteine 98. 3'-nitrotyrosine is present on tyrosine 60. 65–69 lines the substrate pocket; the sequence is KNQNT. N-linked (GlcNAc...) asparagine glycans are attached at residues asparagine 86, asparagine 92, asparagine 111, and asparagine 119. Histidine 156 functions as the Proton donor in the catalytic mechanism.

It belongs to the pancreatic ribonuclease family. As to quaternary structure, interacts with and forms a tight 1:1 complex with RNH1. Dimerization of two such complexes may occur.

The protein resides in the lysosome. Its subcellular location is the cytoplasmic granule. The enzyme catalyses an [RNA] containing cytidine + H2O = an [RNA]-3'-cytidine-3'-phosphate + a 5'-hydroxy-ribonucleotide-3'-[RNA].. It carries out the reaction an [RNA] containing uridine + H2O = an [RNA]-3'-uridine-3'-phosphate + a 5'-hydroxy-ribonucleotide-3'-[RNA].. This is a non-secretory ribonuclease. It is a pyrimidine specific nuclease with a slight preference for U. Cytotoxin and helminthotoxin. Possesses a wide variety of biological activities. In Gorilla gorilla gorilla (Western lowland gorilla), this protein is Non-secretory ribonuclease (RNASE2).